Reading from the N-terminus, the 290-residue chain is GTPase Era (290 aa).

Residues 2–169 (KSGFAAILGR…KNKIYENFSE (168 aa)) enclose the Era-type G domain. The G1 stretch occupies residues 10–17 (GRPSTGKS). 10–17 (GRPSTGKS) is a GTP binding site. Positions 36–40 (QTTRN) are G2. Positions 57–60 (DTPG) are G3. Residues 57–61 (DTPGF) and 119–122 (NKVD) each bind GTP. The G4 stretch occupies residues 119-122 (NKVD). The tract at residues 148–150 (ISA) is G5. In terms of domain architecture, KH type-2 spans 200-276 (LKEELPYSLY…NLFLQVKLKK (77 aa)).

It belongs to the TRAFAC class TrmE-Era-EngA-EngB-Septin-like GTPase superfamily. Era GTPase family. As to quaternary structure, monomer.

It is found in the cytoplasm. Its subcellular location is the cell inner membrane. In terms of biological role, an essential GTPase that binds both GDP and GTP, with rapid nucleotide exchange. Plays a role in 16S rRNA processing and 30S ribosomal subunit biogenesis and possibly also in cell cycle regulation and energy metabolism. The sequence is that of GTPase Era from Borreliella afzelii (strain PKo) (Borrelia afzelii).